Reading from the N-terminus, the 1263-residue chain is Histone-lysine N-methyltransferase EHMT2 (1263 aa).

2 disordered regions span residues 1–314 and 332–439; these read MRGL…LEEW and DERV…EYME. The segment covering 26–39 has biased composition (basic residues); the sequence is GRGRGGAHRGRGRP. At arginine 40 the chain carries Asymmetric dimethylarginine. A compositionally biased stretch (basic and acidic residues) spans 83–95; sequence LEKEPRGAAERVH. Serine 97 bears the Phosphoserine mark. A Phosphothreonine modification is found at threonine 101. 2 positions are modified to phosphoserine: serine 104 and serine 193. Residue lysine 239 is modified to N6,N6,N6-trimethyllysine; by EHMT2; alternate. Lysine 239 is subject to N6,N6-dimethyllysine; by EHMT2; alternate. Positions 252–270 are enriched in basic and acidic residues; the sequence is PEKRPPEVQHFRMSDDMHL. Glycyl lysine isopeptide (Lys-Gly) (interchain with G-Cter in SUMO2) cross-links involve residues lysine 272 and lysine 282. Phosphoserine is present on residues serine 285, serine 294, and serine 298. 2 stretches are compositionally biased toward basic and acidic residues: residues 302–312 and 332–343; these read ILEKGEPRPLE and DERVDSDSKSEV. Over residues 350–380 the composition is skewed to acidic residues; the sequence is LSEEEEEEEEEEEEEEEEEEEEEEEEEDEES. A compositionally biased stretch (basic residues) spans 391–400; the sequence is GRRKAKKKWR. Phosphoserine is present on residues serine 403, serine 465, and serine 466. The residue at position 608 (threonine 608) is a Phosphothreonine. Residues 621–647 form a disordered region; it reads LAHDAPGRADTSQPSARMRGHGEPRRP. A Glycyl lysine isopeptide (Lys-Gly) (interchain with G-Cter in SUMO2) cross-link involves residue lysine 687. 7 ANK repeats span residues 702 to 731, 737 to 766, 770 to 799, 803 to 833, 837 to 866, 870 to 899, and 903 to 932; these read FHPR…DPNF, SKRT…NINA, QQRT…CVYS, DGST…DVNA, GGWT…DVTL, EENI…DLHA, and HGDT…NPEL. The histone H3K9me binding stretch occupies residues 870–872; sequence EEN. Positions 1025–1088 constitute a Pre-SET domain; sequence QHCTCVDDCS…SCKNRVVQSG (64 aa). Zn(2+) contacts are provided by cysteine 1027, cysteine 1029, cysteine 1033, cysteine 1038, cysteine 1040, cysteine 1070, cysteine 1074, cysteine 1076, and cysteine 1080. Positions 1091-1208 constitute an SET domain; that stretch reads VRLQLYRTAK…TGEELGFDYG (118 aa). S-adenosyl-L-methionine is bound by residues 1101–1103, tyrosine 1138, and 1165–1166; these read MGW and NH. Residues 1127-1146 are interaction with histone H3; sequence DAEADVREDDSYLFDLDNKD. Cysteine 1168 is a Zn(2+) binding site. Residues 1207–1210 are interaction with histone H3; sequence YGDR. The Post-SET domain maps to 1217-1233; that stretch reads KYFTCQCGSEKCKHSAE. Zn(2+) contacts are provided by cysteine 1221, cysteine 1223, and cysteine 1228. Serine 1257 carries the post-translational modification Phosphoserine. A Phosphothreonine modification is found at threonine 1263.

This sequence belongs to the class V-like SAM-binding methyltransferase superfamily. Histone-lysine methyltransferase family. Suvar3-9 subfamily. Heterodimer; heterodimerizes with EHMT1/GLP. Interacts with GFI1B and WIZ. Part of the E2F6.com-1 complex in G0 phase composed of E2F6, MGA, MAX, TFDP1, CBX3, BAT8, EHMT1, RING1, RNF2, MBLR, L3MBTL2 and YAF2. Part of a complex composed of TRIM28, HDAC1, HDAC2 and EHMT2. Interacts with UHRF1. Interacts with CDYL. Interacts with REST only in the presence of CDYL. Part of a complex containing at least CDYL, REST, WIZ, SETB1, EHMT1 and EHMT2. Interacts with PRDM9 and CDYL; interaction only takes place when PRDM9 is bound to hotspot DNA. Interacts with SMYD5. In terms of processing, methylated at Lys-239; automethylated. As to expression, ubiquitous.

It localises to the nucleus. The protein resides in the chromosome. The catalysed reaction is N(6)-methyl-L-lysyl(9)-[histone H3] + S-adenosyl-L-methionine = N(6),N(6)-dimethyl-L-lysyl(9)-[histone H3] + S-adenosyl-L-homocysteine + H(+). The enzyme catalyses L-lysyl(9)-[histone H3] + S-adenosyl-L-methionine = N(6)-methyl-L-lysyl(9)-[histone H3] + S-adenosyl-L-homocysteine + H(+). Its function is as follows. Histone methyltransferase that specifically mono- and dimethylates 'Lys-9' of histone H3 (H3K9me1 and H3K9me2, respectively) in euchromatin. H3K9me represents a specific tag for epigenetic transcriptional repression by recruiting HP1 proteins to methylated histones. Also mediates monomethylation of 'Lys-56' of histone H3 (H3K56me1) in G1 phase, leading to promote interaction between histone H3 and PCNA and regulating DNA replication. Also weakly methylates 'Lys-27' of histone H3 (H3K27me). Also required for DNA methylation, the histone methyltransferase activity is not required for DNA methylation, suggesting that these 2 activities function independently. Probably targeted to histone H3 by different DNA-binding proteins like E2F6, MGA, MAX and/or DP1. May also methylate histone H1. In addition to the histone methyltransferase activity, also methylates non-histone proteins: mediates dimethylation of 'Lys-373' of p53/TP53. Also methylates CDYL, WIZ, ACIN1, DNMT1, HDAC1, ERCC6, KLF12 and itself. The polypeptide is Histone-lysine N-methyltransferase EHMT2 (Ehmt2) (Mus musculus (Mouse)).